A 563-amino-acid chain; its full sequence is Putative cysteine ligase BshC (563 aa).

Residues 474–506 (LEQSLMGTSKQAEKALDTLRQKTQRANRRKHDE) are a coiled coil.

This sequence belongs to the BshC family.

This chain is Putative cysteine ligase BshC, found in Prosthecochloris aestuarii (strain DSM 271 / SK 413).